A 379-amino-acid polypeptide reads, in one-letter code: Bifunctional enzyme IspD/IspF (379 aa).

The interval 1–223 is 2-C-methyl-D-erythritol 4-phosphate cytidylyltransferase; the sequence is MTVAVIIVAA…RERKGLTMDV (223 aa). Residues 224-379 are 2-C-methyl-D-erythritol 2,4-cyclodiphosphate synthase; the sequence is RLGNGYDVHA…SIATVTLIGA (156 aa). A divalent metal cation contacts are provided by Asp230 and His232. 4-CDP-2-C-methyl-D-erythritol 2-phosphate-binding positions include 230 to 232 and 256 to 257; these read DVH and HS. His264 contributes to the a divalent metal cation binding site. Residues 278–280, 354–357, Phe361, and Arg364 each bind 4-CDP-2-C-methyl-D-erythritol 2-phosphate; these read DIG and TTSE.

In the N-terminal section; belongs to the IspD/TarI cytidylyltransferase family. IspD subfamily. This sequence in the C-terminal section; belongs to the IspF family. A divalent metal cation is required as a cofactor.

It catalyses the reaction 2-C-methyl-D-erythritol 4-phosphate + CTP + H(+) = 4-CDP-2-C-methyl-D-erythritol + diphosphate. It carries out the reaction 4-CDP-2-C-methyl-D-erythritol 2-phosphate = 2-C-methyl-D-erythritol 2,4-cyclic diphosphate + CMP. The protein operates within isoprenoid biosynthesis; isopentenyl diphosphate biosynthesis via DXP pathway; isopentenyl diphosphate from 1-deoxy-D-xylulose 5-phosphate: step 2/6. It participates in isoprenoid biosynthesis; isopentenyl diphosphate biosynthesis via DXP pathway; isopentenyl diphosphate from 1-deoxy-D-xylulose 5-phosphate: step 4/6. Its function is as follows. Bifunctional enzyme that catalyzes the formation of 4-diphosphocytidyl-2-C-methyl-D-erythritol from CTP and 2-C-methyl-D-erythritol 4-phosphate (MEP) (IspD), and catalyzes the conversion of 4-diphosphocytidyl-2-C-methyl-D-erythritol 2-phosphate (CDP-ME2P) to 2-C-methyl-D-erythritol 2,4-cyclodiphosphate (ME-CPP) with a corresponding release of cytidine 5-monophosphate (CMP) (IspF). The protein is Bifunctional enzyme IspD/IspF of Rhodobacter capsulatus (strain ATCC BAA-309 / NBRC 16581 / SB1003).